The sequence spans 353 residues: Probable dual-specificity RNA methyltransferase RlmN (353 aa).

Residue E95 is the Proton acceptor of the active site. The Radical SAM core domain occupies 103–333 (DGGRKTICIS…PILNRRSPGR (231 aa)). An intrachain disulfide couples C110 to C339. [4Fe-4S] cluster-binding residues include C117, C121, and C124. S-adenosyl-L-methionine-binding positions include 164–165 (GE), S196, 219–221 (SLN), and N296. C339 functions as the S-methylcysteine intermediate in the catalytic mechanism.

It belongs to the radical SAM superfamily. RlmN family. [4Fe-4S] cluster serves as cofactor.

The protein localises to the cytoplasm. It catalyses the reaction adenosine(2503) in 23S rRNA + 2 reduced [2Fe-2S]-[ferredoxin] + 2 S-adenosyl-L-methionine = 2-methyladenosine(2503) in 23S rRNA + 5'-deoxyadenosine + L-methionine + 2 oxidized [2Fe-2S]-[ferredoxin] + S-adenosyl-L-homocysteine. The enzyme catalyses adenosine(37) in tRNA + 2 reduced [2Fe-2S]-[ferredoxin] + 2 S-adenosyl-L-methionine = 2-methyladenosine(37) in tRNA + 5'-deoxyadenosine + L-methionine + 2 oxidized [2Fe-2S]-[ferredoxin] + S-adenosyl-L-homocysteine. In terms of biological role, specifically methylates position 2 of adenine 2503 in 23S rRNA and position 2 of adenine 37 in tRNAs. This chain is Probable dual-specificity RNA methyltransferase RlmN, found in Leptospira biflexa serovar Patoc (strain Patoc 1 / Ames).